Consider the following 160-residue polypeptide: Phosphopantetheine adenylyltransferase (160 aa).

S8 is a binding site for substrate. Residues 8-9 (SF) and H16 each bind ATP. Substrate is bound by residues K40, T72, and R86. Residues 87-89 (GLR), E97, and 122-128 (YSFLSSS) each bind ATP.

This sequence belongs to the bacterial CoaD family. As to quaternary structure, homohexamer. The cofactor is Mg(2+).

Its subcellular location is the cytoplasm. The catalysed reaction is (R)-4'-phosphopantetheine + ATP + H(+) = 3'-dephospho-CoA + diphosphate. The protein operates within cofactor biosynthesis; coenzyme A biosynthesis; CoA from (R)-pantothenate: step 4/5. In terms of biological role, reversibly transfers an adenylyl group from ATP to 4'-phosphopantetheine, yielding dephospho-CoA (dPCoA) and pyrophosphate. This is Phosphopantetheine adenylyltransferase from Synechococcus sp. (strain CC9311).